We begin with the raw amino-acid sequence, 466 residues long: Asparagine--tRNA ligase (466 aa).

Belongs to the class-II aminoacyl-tRNA synthetase family. In terms of assembly, homodimer.

The protein localises to the cytoplasm. The catalysed reaction is tRNA(Asn) + L-asparagine + ATP = L-asparaginyl-tRNA(Asn) + AMP + diphosphate + H(+). In Photobacterium profundum (strain SS9), this protein is Asparagine--tRNA ligase.